The sequence spans 96 residues: Protein RnfH (96 aa).

Belongs to the UPF0125 (RnfH) family.

This is Protein RnfH from Psychromonas ingrahamii (strain DSM 17664 / CCUG 51855 / 37).